Reading from the N-terminus, the 459-residue chain is Aluminum-activated malate transporter 1 (459 aa).

Over 1–52 (MDIDHGRESDGEMVGTIASCGLLLHSLLAGLGRRAAGFARKVGGAAREDPRR) the chain is Extracellular. A run of 2 helical transmembrane segments spans residues 53–73 (VAHSLKVGLALALVSVVYFVT) and 74–94 (PLFNGLGVSAIWAVLTVVVVM). Residues 95–108 (EYTVGATLSKGLNR) are Extracellular-facing. The helical transmembrane segment at 109–129 (ALATLVAGCIAVGAHQLAELA) threads the bilayer. Topologically, residues 130 to 137 (ERCGDQGE) are cytoplasmic. A helical membrane pass occupies residues 138 to 158 (PIVLTVLVFFVASAATFLRFI). Residues 159 to 160 (PE) lie on the Extracellular side of the membrane. Residues 161–181 (IKAKYDYGVTIFILTFGLVAV) traverse the membrane as a helical segment. Residues 182-199 (SSYRVEELIQLAHQRFYT) lie on the Cytoplasmic side of the membrane. Residues 200-220 (IAVGVFICLCTTVFLFPVWAG) traverse the membrane as a helical segment. The Extracellular segment spans residues 221–459 (EDVHKLASGN…DEPLPDVVIL (239 aa)).

The protein belongs to the aromatic acid exporter (TC 2.A.85) family. In terms of tissue distribution, detected in root tips.

Its subcellular location is the cell membrane. With respect to regulation, activated by external aluminum. The enhancement of malate transport is not due to alteration in the selectivity properties but is due to an increased anion permeability. In terms of biological role, malate transporter critical for aluminum tolerance. Permeable to chloride, nitrate, sulfate and malate. This chain is Aluminum-activated malate transporter 1 (ALMT1), found in Triticum aestivum (Wheat).